We begin with the raw amino-acid sequence, 843 residues long: DNA-directed RNA polymerase subunit beta' (843 aa).

Zn(2+)-binding residues include Cys-70, Cys-72, Cys-85, and Cys-88. Residues Asp-686, Asp-688, and Asp-690 each coordinate Mg(2+).

This sequence belongs to the RNA polymerase beta' chain family. RpoC1 subfamily. In terms of assembly, in plastids the minimal PEP RNA polymerase catalytic core is composed of four subunits: alpha, beta, beta', and beta''. When a (nuclear-encoded) sigma factor is associated with the core the holoenzyme is formed, which can initiate transcription. Mg(2+) is required as a cofactor. The cofactor is Zn(2+).

It localises to the plastid. Its subcellular location is the chloroplast. It catalyses the reaction RNA(n) + a ribonucleoside 5'-triphosphate = RNA(n+1) + diphosphate. Functionally, DNA-dependent RNA polymerase catalyzes the transcription of DNA into RNA using the four ribonucleoside triphosphates as substrates. The polypeptide is DNA-directed RNA polymerase subunit beta' (Trieres chinensis (Marine centric diatom)).